Here is a 151-residue protein sequence, read N- to C-terminus: Small ribosomal subunit protein uS15 (151 aa).

Lysine 27 is subject to N6-acetyllysine; alternate. N6-succinyllysine; alternate is present on lysine 27. Residue lysine 27 forms a Glycyl lysine isopeptide (Lys-Gly) (interchain with G-Cter in ubiquitin) linkage. At serine 30 the chain carries Phosphoserine. Position 34 is an N6-succinyllysine (lysine 34). At tyrosine 38 the chain carries Phosphotyrosine. Lysine 43 participates in a covalent cross-link: Glycyl lysine isopeptide (Lys-Gly) (interchain with G-Cter in SUMO2).

Belongs to the universal ribosomal protein uS15 family. Component of the small ribosomal subunit. Part of the small subunit (SSU) processome, composed of more than 70 proteins and the RNA chaperone small nucleolar RNA (snoRNA) U3. Ubiquitinated at Lys-27 by RNF14 and RNF25 in response to ribosome collisions (ribosome stalling).

It localises to the cytoplasm. The protein resides in the nucleus. It is found in the nucleolus. Functionally, component of the small ribosomal subunit. The ribosome is a large ribonucleoprotein complex responsible for the synthesis of proteins in the cell. Part of the small subunit (SSU) processome, first precursor of the small eukaryotic ribosomal subunit. During the assembly of the SSU processome in the nucleolus, many ribosome biogenesis factors, an RNA chaperone and ribosomal proteins associate with the nascent pre-rRNA and work in concert to generate RNA folding, modifications, rearrangements and cleavage as well as targeted degradation of pre-ribosomal RNA by the RNA exosome. The polypeptide is Small ribosomal subunit protein uS15 (RPS13) (Cricetulus griseus (Chinese hamster)).